The chain runs to 504 residues: Pyruvate kinase (504 aa).

Position 53 (Arg53) interacts with substrate. Residues Asn55, Ser57, Asp88, and Thr89 each coordinate K(+). 55–58 provides a ligand contact to ATP; that stretch reads NFSH. ATP is bound by residues Arg95 and Lys181. Glu246 provides a ligand contact to Mg(2+). Gly269, Asp270, and Thr302 together coordinate substrate. Residue Asp270 participates in Mg(2+) binding.

Belongs to the pyruvate kinase family. Homotetramer. It depends on Mg(2+) as a cofactor. The cofactor is K(+).

Its subcellular location is the cytoplasm. The enzyme catalyses pyruvate + ATP = phosphoenolpyruvate + ADP + H(+). The protein operates within carbohydrate degradation; glycolysis; pyruvate from D-glyceraldehyde 3-phosphate: step 5/5. This is Pyruvate kinase (CDC19) from Candida albicans (strain SC5314 / ATCC MYA-2876) (Yeast).